We begin with the raw amino-acid sequence, 174 residues long: Streptothricin acetyltransferase (174 aa).

The region spanning 20–170 is the N-acetyltransferase domain; that stretch reads FIVREVFDVH…AMYWYWFSGA (151 aa).

Belongs to the acetyltransferase family. GNAT subfamily.

It carries out the reaction streptothricin F + acetyl-CoA = N(beta)-acetylstreptothricin F + CoA + H(+). In terms of biological role, involved in resistance to streptothricin, a broad-spectrum antibiotic produced by streptomycetes. Detoxifies streptothricin via acetylation of the beta amino group of the first beta-lysyl moiety of streptothricin. This is Streptothricin acetyltransferase (sat-1) from Escherichia coli.